A 186-amino-acid chain; its full sequence is UPF0301 protein Tgr7_2910 (186 aa).

This sequence belongs to the UPF0301 (AlgH) family.

The protein is UPF0301 protein Tgr7_2910 of Thioalkalivibrio sulfidiphilus (strain HL-EbGR7).